A 572-amino-acid chain; its full sequence is Protein 5NUC (572 aa).

An N-terminal signal peptide occupies residues 1-25 (MLFFLNFFVLVFSIELALLTASAAA). The Zn(2+) site is built by D39 and H41. A disulfide bond links C54 and C64. N82 is a glycosylation site (N-linked (GlcNAc...) asparagine). Zn(2+) contacts are provided by D93, N125, H227, and H250. C360 and C365 are oxidised to a cystine. Residues R361, Q399, R404, and F427 each contribute to the substrate site. N-linked (GlcNAc...) asparagine glycans are attached at residues N454 and N490. C488 and C491 are disulfide-bonded. 512 to 518 (FMKDGGD) provides a ligand contact to substrate.

Belongs to the 5'-nucleotidase family. Zn(2+) is required as a cofactor.

The catalysed reaction is UDP-sugar + H2O = UMP + alpha-D-aldose 1-phosphate.. It carries out the reaction a ribonucleoside 5'-phosphate + H2O = a ribonucleoside + phosphate. Its function is as follows. Degradation of external UDP-glucose to uridine monophosphate and glucose-1-phosphate, which can then be used by the cell. The sequence is that of Protein 5NUC (5NUC) from Lutzomyia longipalpis (Sand fly).